A 221-amino-acid chain; its full sequence is Sentrin-specific protease 8 (221 aa).

M1 carries the post-translational modification N-acetylmethionine. The segment at 11-174 is protease; the sequence is SLLRQSDVSL…MYVICNTEAL (164 aa). Catalysis depends on residues H102 and D119. Residue C163 is the Nucleophile of the active site.

The protein belongs to the peptidase C48 family.

Functionally, protease that catalyzes two essential functions in the NEDD8 pathway: processing of full-length NEDD8 to its mature form and deconjugation of NEDD8 from targeted proteins such as cullins or p53. In Mus musculus (Mouse), this protein is Sentrin-specific protease 8 (Senp8).